The sequence spans 209 residues: C-type lectin domain family 6 member A (209 aa).

At 1–20 the chain is on the cytoplasmic side; it reads MMQEQQPQSTEKRGWLSLRL. A helical; Signal-anchor for type II membrane protein transmembrane segment spans residues 21–41; it reads WSVAGISIALLSACFIVSCVV. Residues 42-209 are Extracellular-facing; that stretch reads TYHFTYGETG…SICEMNKIYL (168 aa). 4 cysteine pairs are disulfide-bonded: cysteine 66–cysteine 78, cysteine 79–cysteine 90, cysteine 107–cysteine 202, and cysteine 176–cysteine 194. One can recognise a C-type lectin domain in the interval 86–203; sequence FGSSCYFISS…CETRRNSICE (118 aa). Ca(2+) is bound by residues valine 116, asparagine 118, and glutamate 122. An N-linked (GlcNAc...) asparagine glycan is attached at asparagine 131. Positions 168, 170, and 174 each coordinate Ca(2+). Alpha-D-mannopyranose contacts are provided by residues 168 to 170, glutamate 174, tryptophan 182, 190 to 191, and arginine 198; these read EPN and ND. The N-linked (GlcNAc...) asparagine glycan is linked to asparagine 170. Ca(2+) contacts are provided by asparagine 190 and aspartate 191. Residue glutamate 203 participates in Ca(2+) binding.

In terms of assembly, associated with FCER1G. Heterodimer with CLEC4D; this heterodimer forms a pattern recognition receptor (PRR) against fungal infection. Expressed in lung, spleen, lymph node, leukocytes, bone marrow, tonsils and dendritic cells. Strongly expressed in purified monocytes and weakly in B-cells. In peripheral blood cells, preferentially expressed in plasmacytoids rather than myeloids.

The protein resides in the cell membrane. Its function is as follows. Calcium-dependent lectin that acts as a pattern recognition receptor (PRR) of the innate immune system: specifically recognizes and binds alpha-mannans on C.albicans hypheas. Binding of C.albicans alpha-mannans to this receptor complex leads to phosphorylation of the immunoreceptor tyrosine-based activation motif (ITAM) of FCER1G, triggering activation of SYK, CARD9 and NF-kappa-B, consequently driving maturation of antigen-presenting cells and shaping antigen-specific priming of T-cells toward effector T-helper 1 and T-helper 17 cell subtypes. Recognizes also, in a mannose-dependent manner, allergens from house dust mite and fungi, by promoting cysteinyl leukotriene production. Recognizes soluble elements from the eggs of Shistosoma mansoni altering adaptive immune responses. The chain is C-type lectin domain family 6 member A from Homo sapiens (Human).